We begin with the raw amino-acid sequence, 796 residues long: Pleckstrin homology domain-containing family H member 3 (796 aa).

The signal sequence occupies residues 1–18 (MPLPGGLWWLLCCRRGFT). The tract at residues 28-71 (ELSGDGDEDEDDETFELRTPSPAGGGRGSLDVTLTQPTRNGPIS) is disordered. Acidic residues predominate over residues 29–41 (LSGDGDEDEDDET). Ser-30 carries the phosphoserine modification. Over residues 59 to 68 (VTLTQPTRNG) the composition is skewed to polar residues. The region spanning 95 to 199 (DIIVKGWLYR…WGVALREVIA (105 aa)) is the PH domain. The MyTH4 domain maps to 237-399 (HTSSALYAPL…PSLAEISALS (163 aa)). Positions 404–757 (LLCTVHCPGA…ANPSPERPCR (354 aa)) constitute an FERM domain. Residue Asn-474 is glycosylated (N-linked (GlcNAc...) asparagine). 2 disordered regions span residues 557 to 584 (PLLD…PPSA) and 598 to 625 (KRRA…GGAS). Pro residues predominate over residues 563-583 (LPPPIPPREQPPCPTRRPPPS). The span at 598–608 (KRRAERARRGG) shows a compositional bias: basic residues. Arg-638 carries the post-translational modification Omega-N-methylarginine. A disordered region spans residues 750 to 796 (PSPERPCRSGSSSGPPSQDLPDTSPPSQHQVLEEPQGQSGCLKQLQD). Low complexity predominate over residues 757–766 (RSGSSSGPPS). A compositionally biased stretch (polar residues) spans 774 to 796 (PPSQHQVLEEPQGQSGCLKQLQD).

In Mus musculus (Mouse), this protein is Pleckstrin homology domain-containing family H member 3 (Plekhh3).